The sequence spans 168 residues: 6,7-dimethyl-8-ribityllumazine synthase (168 aa).

5-amino-6-(D-ribitylamino)uracil contacts are provided by residues Phe24, 58–60 (ALE), and 82–84 (AVI). 87-88 (ET) is a binding site for (2S)-2-hydroxy-3-oxobutyl phosphate. His90 (proton donor) is an active-site residue. Asn115 is a 5-amino-6-(D-ribitylamino)uracil binding site. (2S)-2-hydroxy-3-oxobutyl phosphate is bound at residue Arg129.

Belongs to the DMRL synthase family.

The catalysed reaction is (2S)-2-hydroxy-3-oxobutyl phosphate + 5-amino-6-(D-ribitylamino)uracil = 6,7-dimethyl-8-(1-D-ribityl)lumazine + phosphate + 2 H2O + H(+). The protein operates within cofactor biosynthesis; riboflavin biosynthesis; riboflavin from 2-hydroxy-3-oxobutyl phosphate and 5-amino-6-(D-ribitylamino)uracil: step 1/2. Catalyzes the formation of 6,7-dimethyl-8-ribityllumazine by condensation of 5-amino-6-(D-ribitylamino)uracil with 3,4-dihydroxy-2-butanone 4-phosphate. This is the penultimate step in the biosynthesis of riboflavin. The polypeptide is 6,7-dimethyl-8-ribityllumazine synthase (Paraburkholderia phytofirmans (strain DSM 17436 / LMG 22146 / PsJN) (Burkholderia phytofirmans)).